Reading from the N-terminus, the 2034-residue chain is Pecanex-like protein 3 (2034 aa).

The next 2 membrane-spanning stretches (helical) occupy residues 33–53 (CFHLYVWIFLLIFPFLLYMVL) and 54–74 (PPSLMVAGVYCLVVAVIFATI). Positions 96-118 (STMGELEEEPAQGDSNPPRDPGV) are disordered. Ser127 carries the post-translational modification Phosphoserine. Thr129 carries the post-translational modification Phosphothreonine. Disordered regions lie at residues 193-242 (IGDL…PLLK), 260-517 (DRAL…LRPP), and 540-625 (VLPA…SHSR). The segment covering 294 to 303 (KAGSSDSCFS) has biased composition (polar residues). Positions 305–319 (TDRETLSSFKSEKTN) are enriched in basic and acidic residues. Asn319 carries an N-linked (GlcNAc...) asparagine glycan. At Thr370 the chain carries Phosphothreonine. The segment covering 391–409 (PSKRQPPLRRHSPPGRAPR) has biased composition (basic residues). Phosphoserine occurs at positions 392 and 431. Positions 427 to 436 (GSELSPASSL) are enriched in polar residues. The span at 444-460 (TDSSSSTSCYSPESSRG) shows a compositional bias: low complexity. The segment covering 488 to 497 (TQRTPSTASA) has biased composition (polar residues). Ser505 bears the Phosphoserine mark. Helical transmembrane passes span 790 to 812 (VLENIFGVGLSSLVAFLGYLLLL), 819 to 836 (IWVFQFCLVIASCQYSLL), 852 to 872 (WVIAYSRPVYFCICCLLIWLL), 880 to 900 (PFPPVSLYGLTLFSASFFFCA), 903 to 923 (VATVFTLCFPFVFLLGLLPQV), 946 to 968 (SPLTAVFSLSRSLLAAALLYGFC), and 980 to 1000 (HVPVLFSVFCGLLVALSYHLS). Ser1025 carries the post-translational modification Phosphoserine. 4 helical membrane-spanning segments follow: residues 1053 to 1073 (LVMCVVIAVLTFAISASTVFI), 1078 to 1098 (VLGFVLYALAGAVGFFTHYLL), 1244 to 1264 (FVLTYIAPWQITWGSAFHAFA), and 1280 to 1300 (LLSGLFSTPLNPLLGSAVFIM). At Ser1697 the chain carries Phosphoserine. An N-linked (GlcNAc...) asparagine glycan is attached at Asn1770. The segment at 1844–2034 (GGLTSLSNNP…AAQPLLEHQY (191 aa)) is disordered. Over residues 1890–1910 (RPPPLLQWPPPRLPGPPPASP) the composition is skewed to pro residues. A Phosphoserine modification is found at Ser1909. Positions 1925–1939 (GLLSSEGPSGKWSLG) are enriched in low complexity. Phosphoserine is present on Ser1955. A compositionally biased stretch (low complexity) spans 1969–1978 (LSLSLSLSLS).

This sequence belongs to the pecanex family.

The protein resides in the membrane. This is Pecanex-like protein 3 from Homo sapiens (Human).